A 76-amino-acid polypeptide reads, in one-letter code: Putative defensin-like protein 62 (76 aa).

Residues 1 to 26 (MDVTKTYVTIFVVAILTISVLIQIQQ) form the signal peptide. 4 disulfide bridges follow: C30/C71, C34/C57, C43/C69, and C47/C70.

This sequence belongs to the DEFL family.

The protein localises to the secreted. The polypeptide is Putative defensin-like protein 62 (Arabidopsis thaliana (Mouse-ear cress)).